The sequence spans 467 residues: FAD-dependent oxidoreductase dbaF (467 aa).

The N-terminal stretch at 1 to 20 (MKSVLASGALTLAFSLAALA) is a signal peptide. 5 N-linked (GlcNAc...) asparagine glycosylation sites follow: Asn-96, Asn-134, Asn-337, Asn-391, and Asn-451.

The protein belongs to the beta-cyclopiazonate dehydrogenase family. Requires FAD as cofactor.

It functions in the pathway secondary metabolite biosynthesis. Its function is as follows. FAD-dependent oxidoreductase; part of the gene cluster that mediates the biosynthesis of the antibiotic 2,4-dihydroxy-3-methyl-6-(2-oxopropyl)benzaldehyde (DHMBA) and its derivatives. The direct non-reducing polyketide synthase dbaI product is 2,4-dihydroxy-3-methyl-6-(2-oxopropyl)benzaldehyde (DHMBA), produced by condensation of one acetyl-CoA starter unit with 4 malonyl-CoA units and one methylation step. The FAD-dependent monooxygenase dbaH is responsible for the synthesis of yellow pigments derived from the oxidation of DHMBA. The roles of dbaB, C, E and F have still to be determined. This Emericella nidulans (strain FGSC A4 / ATCC 38163 / CBS 112.46 / NRRL 194 / M139) (Aspergillus nidulans) protein is FAD-dependent oxidoreductase dbaF.